Reading from the N-terminus, the 473-residue chain is MMPGVYALLLLWGLATPCLGLLETVGTLARIDKDELGKAIQNSLVGGPILQNVLGTVTSVNQGLLGAGGLLGGGGLLSYGGLFSLVEELSGLKIEELTLPTVSIKLLPGVGVQLSLHTKVSLHGSGPLVGLLQLAAEVNVSSKVALGMSPRGTPILILKRCNTLLGHISLTSGLLPTPIFGLVEQTLCKVLPGLLCPVVDSVLSVVNELLGATLSLVPLGPLGSVEFTLATLPLISNQYIELDINPIVKSIAGDVIDFPKPRLPVKMPPKEDHTSQVTVPLYLFNTVFGLLQTNGALDLDITPEMVPRNIPLTTTDLAALAPEALGKLPPGQHLLLSLRVMKSPMILLQNKKVTVSIPVTIHVLSSVPQGTPVALFQMNGVMTLNAHLVPSTTKLHISLSLERLTVQLASSFSQPFDASRLEEWLSDVVRAAYMQKLNEHLEVGIPLPKILNVNFANSVVDVIENAVVLTVAP.

The first 20 residues, 1–20, serve as a signal peptide directing secretion; that stretch reads MMPGVYALLLLWGLATPCLG. Asparagine 139 carries an N-linked (GlcNAc...) asparagine glycan. A disulfide bridge links cysteine 161 with cysteine 196.

It belongs to the BPI/LBP/Plunc superfamily. BPI/LBP family. Highly expressed in olfactory mucosa but undetectable in thymus, kidney, lung, brain, spleen and liver.

The protein localises to the secreted. May have the capacity to recognize and bind specific classes of odorants. May act as a carrier molecule, transporting odorants across the mucus layer to access receptor sites. May serve as a primary defense mechanism by recognizing and removing potentially harmful odorants or pathogenic microorganisms from the mucosa or clearing excess odorant from mucus to enable new odorant stimuli to be received. The chain is BPI fold-containing family B member 3 from Rattus norvegicus (Rat).